We begin with the raw amino-acid sequence, 131 residues long: Large ribosomal subunit protein bL12 (131 aa).

The protein belongs to the bacterial ribosomal protein bL12 family. As to quaternary structure, homodimer. Part of the ribosomal stalk of the 50S ribosomal subunit. Forms a multimeric L10(L12)X complex, where L10 forms an elongated spine to which 2 to 4 L12 dimers bind in a sequential fashion. Binds GTP-bound translation factors.

Its function is as follows. Forms part of the ribosomal stalk which helps the ribosome interact with GTP-bound translation factors. Is thus essential for accurate translation. The chain is Large ribosomal subunit protein bL12 from Prochlorococcus marinus (strain NATL1A).